A 342-amino-acid polypeptide reads, in one-letter code: L-threonine 3-dehydrogenase (342 aa).

A Zn(2+)-binding site is contributed by cysteine 38. Active-site charge relay system residues include threonine 40 and histidine 43. Residues histidine 63, glutamate 64, cysteine 93, cysteine 96, cysteine 99, and cysteine 107 each coordinate Zn(2+). NAD(+) contacts are provided by residues isoleucine 175, aspartate 195, arginine 200, 262–264, and 286–287; these read LGI and IY.

It belongs to the zinc-containing alcohol dehydrogenase family. As to quaternary structure, homotetramer. Zn(2+) serves as cofactor.

The protein localises to the cytoplasm. It catalyses the reaction L-threonine + NAD(+) = (2S)-2-amino-3-oxobutanoate + NADH + H(+). Its pathway is amino-acid degradation; L-threonine degradation via oxydo-reductase pathway; glycine from L-threonine: step 1/2. Its function is as follows. Catalyzes the NAD(+)-dependent oxidation of L-threonine to 2-amino-3-ketobutyrate. In Burkholderia ambifaria (strain ATCC BAA-244 / DSM 16087 / CCUG 44356 / LMG 19182 / AMMD) (Burkholderia cepacia (strain AMMD)), this protein is L-threonine 3-dehydrogenase.